Reading from the N-terminus, the 233-residue chain is 7-cyano-7-deazaguanine synthase (233 aa).

ATP is bound at residue 7–17 (LSGGLDSAVTS). Cys195, Cys206, Cys209, and Cys212 together coordinate Zn(2+).

It belongs to the QueC family. It depends on Zn(2+) as a cofactor.

It catalyses the reaction 7-carboxy-7-deazaguanine + NH4(+) + ATP = 7-cyano-7-deazaguanine + ADP + phosphate + H2O + H(+). It participates in purine metabolism; 7-cyano-7-deazaguanine biosynthesis. Catalyzes the ATP-dependent conversion of 7-carboxy-7-deazaguanine (CDG) to 7-cyano-7-deazaguanine (preQ(0)). In Methanococcus maripaludis (strain C6 / ATCC BAA-1332), this protein is 7-cyano-7-deazaguanine synthase.